A 524-amino-acid chain; its full sequence is Casein kinase I homolog 3 (524 aa).

The Protein kinase domain occupies 14–319 (YAVGPKIGEG…YLISLMDDAL (306 aa)). ATP-binding positions include 20-28 (IGEGSFGVI) and K60. The active-site Proton acceptor is D150. 2 disordered regions span residues 352 to 414 (HGYG…KQQH) and 427 to 474 (PETH…EHNL). Residues 360 to 373 (RVNGNTARNNVNTN) show a composition bias toward low complexity. 2 stretches are compositionally biased toward polar residues: residues 374–413 (SKTR…TKQQ) and 429–474 (THSN…EHNL). The YXXZ targeting signal signature appears at 444–447 (YDSI). 7 S-palmitoyl cysteine lipidation sites follow: C517, C518, C519, C520, C522, C523, and C524.

Belongs to the protein kinase superfamily. CK1 Ser/Thr protein kinase family. Casein kinase I subfamily.

It localises to the cell membrane. The protein localises to the nucleus membrane. It is found in the vacuole membrane. It catalyses the reaction L-seryl-[protein] + ATP = O-phospho-L-seryl-[protein] + ADP + H(+). It carries out the reaction L-threonyl-[protein] + ATP = O-phospho-L-threonyl-[protein] + ADP + H(+). Functionally, casein kinases are operationally defined by their preferential utilization of acidic proteins such as caseins as substrates. Phosphorylates MON1, inhibiting the guanine nucleotide exchange factor activity of the MON1-CCZ1 complex, possibly by preventing its recruitment to membranes by small GTPase RAB5 homologs. This chain is Casein kinase I homolog 3 (YCK3), found in Saccharomyces cerevisiae (strain ATCC 204508 / S288c) (Baker's yeast).